The chain runs to 284 residues: Acetylglutamate kinase (284 aa).

Residues 64–65, Arg86, and Asn179 contribute to the substrate site; that span reads GG.

This sequence belongs to the acetylglutamate kinase family. ArgB subfamily.

It localises to the cytoplasm. It catalyses the reaction N-acetyl-L-glutamate + ATP = N-acetyl-L-glutamyl 5-phosphate + ADP. It functions in the pathway amino-acid biosynthesis; L-arginine biosynthesis; N(2)-acetyl-L-ornithine from L-glutamate: step 2/4. Catalyzes the ATP-dependent phosphorylation of N-acetyl-L-glutamate. The polypeptide is Acetylglutamate kinase (Prochlorococcus marinus subsp. pastoris (strain CCMP1986 / NIES-2087 / MED4)).